A 504-amino-acid polypeptide reads, in one-letter code: L-carnitine/gamma-butyrobetaine antiporter (504 aa).

A run of 12 helical transmembrane segments spans residues 10–30, 51–71, 92–112, 143–163, 195–215, 231–251, 263–283, 316–336, 347–367, 398–418, 446–466, and 475–495; these read IEPKVFFPPLIIVGILCWLTV, WGWAFEWYMVVMLFGWFWLVF, IFMMFASCTSAAVLFWGSIEI, GPLPWATYSFLSVAFAYFFFV, FYLVALIFAMGTSLGLATPLV, LDAIIITCWIILNAICVACGL, SYLSFLMLGWVFIVSGASFIM, WTVFYWAWWVIYAIQMSIFLA, LCFGMVLGLTASTWILWTVLG, WAALPLSTATMWGFFILCFIA, LLVRIGWSILVGIIGIVLLAL, and AIIAGGCPLFFVNIMVTLSFI.

This sequence belongs to the BCCT transporter (TC 2.A.15) family. CaiT subfamily. In terms of assembly, homotrimer.

The protein localises to the cell inner membrane. The enzyme catalyses 4-(trimethylamino)butanoate(in) + (R)-carnitine(out) = 4-(trimethylamino)butanoate(out) + (R)-carnitine(in). Its pathway is amine and polyamine metabolism; carnitine metabolism. Catalyzes the exchange of L-carnitine for gamma-butyrobetaine. In Escherichia coli (strain K12 / MC4100 / BW2952), this protein is L-carnitine/gamma-butyrobetaine antiporter.